The chain runs to 546 residues: Cytochrome P450 monooxygenase alnH (546 aa).

A helical membrane pass occupies residues 11 to 31 (VPYSVPLLGSTVVILIGFIAI). 3 N-linked (GlcNAc...) asparagine glycosylation sites follow: Asn146, Asn258, and Asn425. A heme-binding site is contributed by Cys445.

This sequence belongs to the cytochrome P450 family. It depends on heme as a cofactor.

The protein localises to the membrane. It functions in the pathway polyketide biosynthesis. Its function is as follows. Cytochrome P450 monooxygenase; part of the gene cluster that mediates the biosynthesis of asperlin, a polyketide showing anti-inflammatory, antitumor and antibiotic activities. The first step of the asperlin biosynthesis is the production of the intermediate 2,4,6-octatrienoic acid by the highly redusing polyketide synthase alnA with cleavage of the PKS product by the esterase alnB. 2,4,6-octatrienoic acid is further converted to asperlin via several steps involving the remaining enzymes from the cluster. This chain is Cytochrome P450 monooxygenase alnH, found in Emericella nidulans (strain FGSC A4 / ATCC 38163 / CBS 112.46 / NRRL 194 / M139) (Aspergillus nidulans).